Consider the following 262-residue polypeptide: 3-methyl-2-oxobutanoate hydroxymethyltransferase (262 aa).

Mg(2+) contacts are provided by D43 and D82. Residues 43–44, D82, and K110 each bind 3-methyl-2-oxobutanoate; that span reads DS. Residue E112 coordinates Mg(2+). E179 serves as the catalytic Proton acceptor.

It belongs to the PanB family. Homodecamer; pentamer of dimers. Requires Mg(2+) as cofactor.

The protein resides in the cytoplasm. It catalyses the reaction 3-methyl-2-oxobutanoate + (6R)-5,10-methylene-5,6,7,8-tetrahydrofolate + H2O = 2-dehydropantoate + (6S)-5,6,7,8-tetrahydrofolate. The protein operates within cofactor biosynthesis; (R)-pantothenate biosynthesis; (R)-pantoate from 3-methyl-2-oxobutanoate: step 1/2. In terms of biological role, catalyzes the reversible reaction in which hydroxymethyl group from 5,10-methylenetetrahydrofolate is transferred onto alpha-ketoisovalerate to form ketopantoate. This is 3-methyl-2-oxobutanoate hydroxymethyltransferase from Sodalis glossinidius (strain morsitans).